The primary structure comprises 398 residues: MRASYLFTSESVSEGHPDKVCDRISDEVVDLFFREGPKAGIDPWAIRAACETLATTNKVVIAGETRGPASVTNDQIESVVRAAIKDIGYEQEGFHWDTCDIEILLHPQSADIAQGVDALQPGTNKEEGAGDQGIMFGYATNETPDLMPAPIFYAHKILRLISEARHSGKEKVLGPDSKSQVTIQYENGKPVGVREIVVSHQHLVEDMTSNQVRERVEPYVRQALPDGWITDKTIWHINPTGKFYIGGPDGDTGLTGRKIIVDTYGGAAPHGGGAFSGKDPTKVDRSAAYASRYLAKNIVAAGLADRCTLQLAYAIGVARPLSIYIDTHGTGKVSEDKLEKAVAEAMDLTPRGIRSHLDLNKPIYARTSSYGHFGRTPDADGGFSWEKTDLADALKRAV.

An ATP-binding site is contributed by His-16. Mg(2+) is bound at residue Asp-18. Glu-51 contacts K(+). 2 residues coordinate L-methionine: Glu-64 and Gln-108. The interval 108–118 (QSADIAQGVDA) is flexible loop. Residues 176–178 (DSK), 242–243 (KF), Asp-251, 257–258 (RK), Ala-274, and Lys-278 each bind ATP. Residue Asp-251 coordinates L-methionine. Lys-282 lines the L-methionine pocket.

It belongs to the AdoMet synthase family. As to quaternary structure, homotetramer; dimer of dimers. Mg(2+) serves as cofactor. It depends on K(+) as a cofactor.

The protein localises to the cytoplasm. It catalyses the reaction L-methionine + ATP + H2O = S-adenosyl-L-methionine + phosphate + diphosphate. Its pathway is amino-acid biosynthesis; S-adenosyl-L-methionine biosynthesis; S-adenosyl-L-methionine from L-methionine: step 1/1. Its function is as follows. Catalyzes the formation of S-adenosylmethionine (AdoMet) from methionine and ATP. The overall synthetic reaction is composed of two sequential steps, AdoMet formation and the subsequent tripolyphosphate hydrolysis which occurs prior to release of AdoMet from the enzyme. In Rhodopseudomonas palustris (strain HaA2), this protein is S-adenosylmethionine synthase.